The chain runs to 241 residues: MGKRLIIQRRGRGTPTYRSSSHRFRGKVAYRSYDKLEREGSLTGIVIDIIHDPGRSAPVAVVKFDNGEEKLVLAPESIAIDDEIECGVSASIEPGNTLPLSEIPEGTPVFNIENNPGDGGKFVRSSGTYASLITHDVDKTMIEMPSGELKAFNPRSRATVGVVAGGGRKEKPFLKAGNRYHALKAKGKKMMTVRGVAMNAVDHPHGGGNRQHPGRPTTISRHAPAGRKVGSIAAKRTGKRR.

The segment at 200–241 (AVDHPHGGGNRQHPGRPTTISRHAPAGRKVGSIAAKRTGKRR) is disordered.

This sequence belongs to the universal ribosomal protein uL2 family. Part of the 50S ribosomal subunit. Forms a bridge to the 30S subunit in the 70S ribosome.

In terms of biological role, one of the primary rRNA binding proteins. Required for association of the 30S and 50S subunits to form the 70S ribosome, for tRNA binding and peptide bond formation. It has been suggested to have peptidyltransferase activity; this is somewhat controversial. Makes several contacts with the 16S rRNA in the 70S ribosome. The protein is Large ribosomal subunit protein uL2 of Methanosphaera stadtmanae (strain ATCC 43021 / DSM 3091 / JCM 11832 / MCB-3).